A 391-amino-acid chain; its full sequence is Mannonate dehydratase (391 aa).

It belongs to the mannonate dehydratase family. Fe(2+) is required as a cofactor. The cofactor is Mn(2+).

It catalyses the reaction D-mannonate = 2-dehydro-3-deoxy-D-gluconate + H2O. The protein operates within carbohydrate metabolism; pentose and glucuronate interconversion. Its function is as follows. Catalyzes the dehydration of D-mannonate. The chain is Mannonate dehydratase from Marinomonas sp. (strain MWYL1).